A 156-amino-acid chain; its full sequence is Small ribosomal subunit protein uS7 (156 aa).

Belongs to the universal ribosomal protein uS7 family. In terms of assembly, part of the 30S ribosomal subunit. Contacts proteins S9 and S11.

Its function is as follows. One of the primary rRNA binding proteins, it binds directly to 16S rRNA where it nucleates assembly of the head domain of the 30S subunit. Is located at the subunit interface close to the decoding center, probably blocks exit of the E-site tRNA. The sequence is that of Small ribosomal subunit protein uS7 from Methylococcus capsulatus (strain ATCC 33009 / NCIMB 11132 / Bath).